Here is a 572-residue protein sequence, read N- to C-terminus: Hsp70-Hsp90 organizing protein 1 (572 aa).

TPR repeat units lie at residues 2 to 35, 37 to 69, and 70 to 103; these read AEEA…APTN, VLFS…KPYW, and PKGY…DPTN. Residues 133–172 enclose the STI1 1 domain; the sequence is GPEMWTKLTSDPSTRGFLQQPDFVNMMQEIQKNPSSLNLY. A Phosphoserine modification is found at Ser167. The interval 189 to 248 is disordered; the sequence is KFRPPPPQGDEAEVPESDMGQSSSNEPEVEKKREPEPEPEPEVTEEKEKKERKEKAKKEK. A compositionally biased stretch (basic and acidic residues) spans 232–248; sequence TEEKEKKERKEKAKKEK. The short motif at 241 to 258 is the Bipartite nuclear localization signal element; that stretch reads KEKAKKEKELGNAAYKKK. 7 TPR repeats span residues 244–277, 279–311, 319–356, 358–382, 383–416, 418–450, and 451–484; these read AKKE…DDED, SYLT…GREL, ARAL…HRNP, TLKR…DPKL, GDEE…NPND, KAYS…DPTF, and SKGY…DPSN. The 40-residue stretch at 521-560 folds into the STI1 2 domain; that stretch reads DPEIQNILTDPVMRQVLSDLQENPSAAQKHMQNPMVMNKI.

Co-chaperone that forms a complex with HSP70 and HSP90 and preproteins (e.g. chloroplast preproteins). Post-translationally, phosphorylated. Acetylated.

It is found in the cytoplasm. The protein resides in the nucleus. Mediates the association of the molecular chaperones HSP70 and HSP90. Mediates nuclear encoded chloroplast preproteins binding to HSP90 prior to chloroplastic sorting. The protein is Hsp70-Hsp90 organizing protein 1 (HOP1) of Arabidopsis thaliana (Mouse-ear cress).